Here is a 115-residue protein sequence, read N- to C-terminus: Protein V2 (115 aa).

It belongs to the geminiviridae protein AV2/V2 family. In terms of assembly, interacts with host SGS3.

It localises to the host cytoplasm. It is found in the host perinuclear region. Functionally, through its interaction with host SGS3, acts as a suppressor of RNA-mediated gene silencing, also known as post-transcriptional gene silencing (PTGS), a mechanism of plant viral defense that limits the accumulation of viral RNAs. The polypeptide is Protein V2 (Tomato yellow leaf curl Sardinia virus (TYLCSV)).